Reading from the N-terminus, the 236-residue chain is Snake venom serine protease ussurin (236 aa).

Residues 1 to 227 (VIGGVECNIN…YTDWIQSIIS (227 aa)) enclose the Peptidase S1 domain. Cys-28 and Cys-44 form a disulfide bridge. Active-site charge relay system residues include His-43 and Asp-88. N-linked (GlcNAc...) asparagine glycans are attached at residues Asn-99 and Asn-100. Intrachain disulfides connect Cys-120–Cys-188, Cys-152–Cys-167, and Cys-178–Cys-203. Catalysis depends on Ser-182, which acts as the Charge relay system.

The protein belongs to the peptidase S1 family. Snake venom subfamily. As to quaternary structure, monomer. As to expression, expressed by the venom gland.

It is found in the secreted. Its function is as follows. Snake venom serine protease that may act in the hemostasis system of the prey. This chain is Snake venom serine protease ussurin, found in Gloydius ussuriensis (Ussuri mamushi).